The sequence spans 238 residues: Immunoglobulin superfamily member 6 (238 aa).

The first 27 residues, 1 to 27 (MGPVSTSRRGLRLGISLILLQVGVVGA), serve as a signal peptide directing secretion. Topologically, residues 28-153 (CTVSVLQPGY…RLFSREVHSL (126 aa)) are extracellular. The region spanning 30-134 (VSVLQPGYLE…EPVPTAKQTG (105 aa)) is the Ig-like C2-type domain. The cysteines at positions 51 and 118 are disulfide-linked. A helical transmembrane segment spans residues 154–174 (LIVLLALLAVYVTGVCVIFIV). The Cytoplasmic portion of the chain corresponds to 175–238 (LFRSKSNTPR…RKALPSPGRP (64 aa)). The span at 215–230 (ETSHQPEQDGNYENRK) shows a compositional bias: basic and acidic residues. A disordered region spans residues 215 to 238 (ETSHQPEQDGNYENRKALPSPGRP).

The protein localises to the membrane. This is Immunoglobulin superfamily member 6 (Igsf6) from Rattus norvegicus (Rat).